The following is a 461-amino-acid chain: Probable outer membrane lipoprotein SilC (461 aa).

An N-terminal signal peptide occupies residues 1 to 17; that stretch reads MFKLKLLSISTIFILAG. C18 carries N-palmitoyl cysteine lipidation. The S-diacylglycerol cysteine moiety is linked to residue C18.

It belongs to the outer membrane factor (OMF) (TC 1.B.17) family.

It is found in the cell outer membrane. Component of the sil cation-efflux system that confers resistance to silver. May be part of a three-component cation/proton antiporter. The polypeptide is Probable outer membrane lipoprotein SilC (silC) (Salmonella typhimurium).